The chain runs to 89 residues: Small ribosomal subunit protein uS15 (89 aa).

It belongs to the universal ribosomal protein uS15 family. In terms of assembly, part of the 30S ribosomal subunit. Forms a bridge to the 50S subunit in the 70S ribosome, contacting the 23S rRNA.

In terms of biological role, one of the primary rRNA binding proteins, it binds directly to 16S rRNA where it helps nucleate assembly of the platform of the 30S subunit by binding and bridging several RNA helices of the 16S rRNA. Its function is as follows. Forms an intersubunit bridge (bridge B4) with the 23S rRNA of the 50S subunit in the ribosome. The chain is Small ribosomal subunit protein uS15 from Ligilactobacillus salivarius (strain UCC118) (Lactobacillus salivarius).